A 248-amino-acid polypeptide reads, in one-letter code: Probable succinyl-CoA:3-ketoacid coenzyme A transferase subunit A (248 aa).

A CoA-binding site is contributed by 24-30; sequence GGFGLCG.

Belongs to the 3-oxoacid CoA-transferase subunit A family. As to quaternary structure, heterodimer of a subunit A and a subunit B.

The enzyme catalyses a 3-oxo acid + succinyl-CoA = a 3-oxoacyl-CoA + succinate. This Mycobacterium bovis (strain ATCC BAA-935 / AF2122/97) protein is Probable succinyl-CoA:3-ketoacid coenzyme A transferase subunit A (scoA).